The following is a 228-amino-acid chain: MSSQAPVITIDGPSGSGKGTVAGLLARELGWRLLDSGALYRLLAFNASNHGVDLTNEELLKALAAHLDVQFIAAEPGKLQQIILEGEDVSNVIRTETVGAGASMVASLPAVREALLQRQRAFREAPGLIADGRDMGTVVFPDAPLKVFLTASAEERARRRYLQLKGKGEDVSLSSLLDEIRARDERDTQRAVAPLKPAADAIQLDSTELSIEQVLQRIRSELALRDLI.

12–20 (GPSGSGKGT) contributes to the ATP binding site.

The protein belongs to the cytidylate kinase family. Type 1 subfamily.

Its subcellular location is the cytoplasm. The catalysed reaction is CMP + ATP = CDP + ADP. It carries out the reaction dCMP + ATP = dCDP + ADP. The protein is Cytidylate kinase of Pseudomonas entomophila (strain L48).